The chain runs to 399 residues: 4-hydroxy-3-methylbut-2-enyl diphosphate reductase (399 aa).

Cysteine 66 is a [4Fe-4S] cluster binding site. Histidine 96 lines the (2E)-4-hydroxy-3-methylbut-2-enyl diphosphate pocket. A dimethylallyl diphosphate-binding site is contributed by histidine 96. Histidine 96 contacts isopentenyl diphosphate. Position 157 (cysteine 157) interacts with [4Fe-4S] cluster. A (2E)-4-hydroxy-3-methylbut-2-enyl diphosphate-binding site is contributed by histidine 185. A dimethylallyl diphosphate-binding site is contributed by histidine 185. Histidine 185 provides a ligand contact to isopentenyl diphosphate. Glutamate 187 (proton donor) is an active-site residue. Threonine 250 is a binding site for (2E)-4-hydroxy-3-methylbut-2-enyl diphosphate. Residue cysteine 288 coordinates [4Fe-4S] cluster. Residues serine 317, serine 318, asparagine 319, and serine 380 each contribute to the (2E)-4-hydroxy-3-methylbut-2-enyl diphosphate site. Positions 317, 318, 319, and 380 each coordinate dimethylallyl diphosphate. Serine 317, serine 318, asparagine 319, and serine 380 together coordinate isopentenyl diphosphate.

It belongs to the IspH family. [4Fe-4S] cluster serves as cofactor.

The enzyme catalyses isopentenyl diphosphate + 2 oxidized [2Fe-2S]-[ferredoxin] + H2O = (2E)-4-hydroxy-3-methylbut-2-enyl diphosphate + 2 reduced [2Fe-2S]-[ferredoxin] + 2 H(+). It catalyses the reaction dimethylallyl diphosphate + 2 oxidized [2Fe-2S]-[ferredoxin] + H2O = (2E)-4-hydroxy-3-methylbut-2-enyl diphosphate + 2 reduced [2Fe-2S]-[ferredoxin] + 2 H(+). It functions in the pathway isoprenoid biosynthesis; dimethylallyl diphosphate biosynthesis; dimethylallyl diphosphate from (2E)-4-hydroxy-3-methylbutenyl diphosphate: step 1/1. Its pathway is isoprenoid biosynthesis; isopentenyl diphosphate biosynthesis via DXP pathway; isopentenyl diphosphate from 1-deoxy-D-xylulose 5-phosphate: step 6/6. Catalyzes the conversion of 1-hydroxy-2-methyl-2-(E)-butenyl 4-diphosphate (HMBPP) into a mixture of isopentenyl diphosphate (IPP) and dimethylallyl diphosphate (DMAPP). Acts in the terminal step of the DOXP/MEP pathway for isoprenoid precursor biosynthesis. This chain is 4-hydroxy-3-methylbut-2-enyl diphosphate reductase, found in Synechococcus sp. (strain CC9902).